The primary structure comprises 962 residues: Protocadherin gamma-A4 (962 aa).

Residues 1 to 24 are disordered; that stretch reads MHFILDPEDPGAPQASTEGKPKHR. The N-terminal stretch at 1–59 is a signal peptide; that stretch reads MHFILDPEDPGAPQASTEGKPKHRRLRGGVVMAAPPARPDHTRLLQICLLLGVLVEIRA. Cadherin domains follow at residues 60–164, 165–273, 274–378, 379–483, 484–598, and 601–713; these read EQIL…PPSF, GTEQ…APVF, TQPE…APEV, TVTS…PPTF, PHAS…YPTF, and DGST…KPSA. Residues 60–723 lie on the Extracellular side of the membrane; that stretch reads EQILYSVFEE…DPDDSGLTLY (664 aa). N-linked (GlcNAc...) asparagine glycosylation is found at N450 and N576. A helical transmembrane segment spans residues 724 to 744; that stretch reads LVVAVAAVSCVFLAFVTVLLA. Over 745 to 962 the chain is Cytoplasmic; it reads LKLRRWHKSR…KKKSGKKEKK (218 aa). Disordered regions lie at residues 832–871 and 932–962; these read KGDPNLQQAPPNTDWRFSQAQRPGTSGSQNGDDTGTWPNN and ATLTNAAGKRDGKAPAGGNGNKKKSGKKEKK. Positions 836–871 are enriched in polar residues; it reads NLQQAPPNTDWRFSQAQRPGTSGSQNGDDTGTWPNN. Residues 952–962 are compositionally biased toward basic residues; sequence NKKKSGKKEKK.

It is found in the cell membrane. Potential calcium-dependent cell-adhesion protein. May be involved in the establishment and maintenance of specific neuronal connections in the brain. This chain is Protocadherin gamma-A4 (PCDHGA4), found in Homo sapiens (Human).